We begin with the raw amino-acid sequence, 83 residues long: MRFHTLLFLSFLLLVSCALICTAQHPGLKKSGMFHENVGKGQHIEKKRSCIERMQTCEVEAGLPCCSGAPCICPYIGDCICIQ.

The N-terminal stretch at 1-23 (MRFHTLLFLSFLLLVSCALICTA) is a signal peptide. Residues 24-48 (QHPGLKKSGMFHENVGKGQHIEKKR) constitute a propeptide that is removed on maturation. Intrachain disulfides connect cysteine 50/cysteine 66, cysteine 57/cysteine 71, and cysteine 65/cysteine 81.

The protein belongs to the neurotoxin 07 (Beta/delta-agtx) family. 03 (aga-4) subfamily. JZTX sub-subfamily. In terms of tissue distribution, expressed by the venom gland.

Its subcellular location is the secreted. Its function is as follows. Inhibits TTX-sensitive sodium currents in rat dorsal root ganglion (DRG) neurons. This is U25-theraphotoxin-Cg1a from Chilobrachys guangxiensis (Chinese earth tiger tarantula).